Reading from the N-terminus, the 514-residue chain is Protein phosphatase 1H (514 aa).

The residue at position 7 (S7) is a Phosphoserine. The PPM-type phosphatase domain maps to 77–507 (ATGYAEVINA…DDISVYVIPL (431 aa)). The interval 109-135 (AVTSTPNRNSSKRRSSLPNGEGLQLKE) is disordered. Residue T113 is modified to Phosphothreonine. Phosphoserine occurs at positions 124 and 211. Residue R213 is modified to Omega-N-methylarginine. S221 carries the phosphoserine modification. Phosphothreonine is present on T224. Position 422 is a phosphoserine (S422).

Belongs to the PP2C family.

The protein localises to the nucleus. The protein resides in the cytoplasm. The enzyme catalyses O-phospho-L-seryl-[protein] + H2O = L-seryl-[protein] + phosphate. It catalyses the reaction O-phospho-L-threonyl-[protein] + H2O = L-threonyl-[protein] + phosphate. Functionally, dephosphorylates CDKN1B at 'Thr-187', thus removing a signal for proteasomal degradation. The protein is Protein phosphatase 1H (PPM1H) of Homo sapiens (Human).